The chain runs to 283 residues: Acetylglutamate kinase (283 aa).

Residues 64 to 65 (GG), arginine 86, and asparagine 181 contribute to the substrate site.

Belongs to the acetylglutamate kinase family. ArgB subfamily.

The protein localises to the cytoplasm. It catalyses the reaction N-acetyl-L-glutamate + ATP = N-acetyl-L-glutamyl 5-phosphate + ADP. It functions in the pathway amino-acid biosynthesis; L-arginine biosynthesis; N(2)-acetyl-L-ornithine from L-glutamate: step 2/4. Catalyzes the ATP-dependent phosphorylation of N-acetyl-L-glutamate. The polypeptide is Acetylglutamate kinase (Sulfurimonas denitrificans (strain ATCC 33889 / DSM 1251) (Thiomicrospira denitrificans (strain ATCC 33889 / DSM 1251))).